Reading from the N-terminus, the 309-residue chain is HTH-type transcriptional activator AaeR (309 aa).

One can recognise an HTH lysR-type domain in the interval methionine 1–threonine 59. The segment at residues phenylalanine 19–serine 38 is a DNA-binding region (H-T-H motif).

This sequence belongs to the LysR transcriptional regulatory family.

Activity is regulated by p-hydroxybenzoic acid. Transcriptional regulator that activates expression of the aaeXAB operon, which is involved in the efflux of aromatic carboxylic acids such as p-hydroxybenzoic acid (pHBA). In the presence of the effector pHBA, acts by binding to a single target within the aaeXAB-aaeR intergenic region. In the absence of pHBA, binds more than 50 sites along the E.coli K12 genome, including genes related to biofilm formation and several genes involved in stress response, suggesting that it might play a role in quorum sensing in the absence of pHBA. The polypeptide is HTH-type transcriptional activator AaeR (Escherichia coli (strain K12)).